We begin with the raw amino-acid sequence, 445 residues long: StAR-related lipid transfer protein 3 (445 aa).

Residues 1 to 51 (MSKLPRELTRDLERSLPAVASLGSSLSHSQSLSSHLLPPPEKRRAISDVRR) are Cytoplasmic-facing. Residues 46–217 (ISDVRRTFCL…YSPPESFAGS (172 aa)) form the MENTAL domain. Residues 52–72 (TFCLFVTFDLLFISLLWIIEL) form a helical membrane-spanning segment. Residues 73–94 (NTNTGIRKNLEQEIIQYNFKTS) are Extracellular-facing. Residues 95 to 115 (FFDIFVLAFFRFSGLLLGYAV) traverse the membrane as a helical segment. Over 116–120 (LRLRH) the chain is Cytoplasmic. The helical transmembrane segment at 121-141 (WWVIAVTTLVSSAFLIVKVIL) threads the bilayer. Over 142 to 148 (SELLSKG) the chain is Extracellular. The chain crosses the membrane as a helical span at residues 149-169 (AFGYLLPIVSFVLAWLETWFL). At 170-445 (DFKVLPQEAE…QRISELGARA (276 aa)) the chain is on the cytoplasmic side. The FFAT signature appears at 206 to 212 (QFYSPPE). Ser-209 carries the phosphoserine modification. The 214-residue stretch at 230–443 (SFSAQEREYI…LRQRISELGA (214 aa)) folds into the START domain.

It belongs to the STARD3 family. Homodimer. Interacts (via the MENTAL domain) with STARD3NL. Interacts (via phosphorylated FFAT motif) with VAPA (via MSP domain). Interacts (via phosphorylated FFAT motif) with VAPB (via MSP domain). Interacts (via phosphorylated FFAT motif) with MOSPD2 (via MSP domain); this interaction allows enrichment of MOSPD2 around endosomes. Phosphorylation at Ser-209 is necessary and sufficient for the direct interaction of the phosphorylated FFAT motif with the MSP domain of MOSPD2, VAPA and VAPB and allows the tethering of two membranes that participates in the formation of ER-endosome contacts. Phosphorylation of the FFAT motif leads to conformation changes. Additional phosphorylations around the core FFAT motif (QFYSPPE) are not essential but strengthen the interaction with MOSPD2, VAPA and VAPB. Phosphorylation at Ser-209 of FFAT motif drives membrane tethering between the endoplasmic reticulum and late endosomes via interaction with VAPA and VAPB that in turn allows the efficient transport of sterol mediated by the START domain. As to expression, expressed in retina.

The protein localises to the late endosome membrane. It carries out the reaction cholesterol(in) = cholesterol(out). Its function is as follows. Sterol-binding protein that mediates cholesterol transport from the endoplasmic reticulum to endosomes. The sterol transport mechanism is triggered by phosphorylation of FFAT motif that leads to membrane tethering between the endoplasmic reticulum and late endosomes via interaction with VAPA and VAPB. Acts as a lipid transfer protein that redirects sterol to the endosome at the expense of the cell membrane and favors membrane formation inside endosomes. May also mediate cholesterol transport between other membranes, such as mitochondria membrane or cell membrane. However, such results need additional experimental evidences; probably mainly mediates cholesterol transport from the endoplasmic reticulum to endosomes. Does not activate transcriptional cholesterol sensing. Able to bind other lipids, such as lutein, a xanthophyll carotenoids that form the macular pigment of the retina. The polypeptide is StAR-related lipid transfer protein 3 (Homo sapiens (Human)).